The primary structure comprises 833 residues: Vacuolar protein sorting-associated protein 16 homolog (833 aa).

Belongs to the VPS16 family. As to quaternary structure, component of the homotypic fusion and vacuole protein sorting (HOPS) complex, composed of Vps16A, car/Vps33A, dor/Vps18, Vps39, Vps11 and lt/Vps41. Interacts with Syx17 (via SNARE domain); the interaction may involve multiple components of the HOPS complex and may promote assembly of the Syx17-Snap29-Vamp7 trans-SNARE complex. Component of the class C core vacuole/endosome tethering (CORVET) complex composed of at least Vps8, dor/Vps18, car/Vps33A and Vps16A; unlike in other species, Vps11 is not part of the Drosophila complex. Due to the reduced number of components the Drosophila CORVET complex is often referred to as the miniCORVET complex. The tethering complex core made up of Vps16A, car/Vps33A and dor/Vps18 and shared by both HOPS and CORVET, preferentially associates with CORVET-specific Vps8 over HOPS-specific lt/Vps41. Interacts with Rab2 (GTP-bound form).

It localises to the late endosome membrane. It is found in the lysosome membrane. Its subcellular location is the cytoplasmic vesicle. The protein resides in the autophagosome. In terms of biological role, core component of the class C core vacuole/endosome tethering (CORVET) and the homotypic fusion and vacuole protein sorting (HOPS) tethering complexes involved in endo-lysosomal vesicle trafficking and lysosome biogenesis. The CORVET complex facilitates docking and fusion of endosomal vesicles during endosome maturation, acts upstream of HOPS, but is not involved in autophagic flux. The CORVET complex may cooperate with the early endosomal tether Rbsn-5 to mediate endosomal fusion. The HOPS complex facilitates docking and fusion of lysosomes with late endosomes and several other types of vesicles. The HOPS complex is also involved in autophagy and crinophagy (the elimination of unused secretory granules through their fusion with lysosomes). The HOPS complex mediates autophagocitic flux, probably by binding autophagosome-associated Syx17/syntaxin 17, promoting assembly of the trans-SNARE complex and instigating autophagosome-lysosome fusion. Independent of Syx17/syntaxin 17, HOPS is involved in biosynthetic transport to lysosomes and lysosome-related organelles such as eye-pigment granules. Required for endocytic degradation of boss/bride of sevenless and N/Notch in developing ommatidia. This is Vacuolar protein sorting-associated protein 16 homolog from Drosophila melanogaster (Fruit fly).